We begin with the raw amino-acid sequence, 242 residues long: Uridylate kinase (242 aa).

An ATP-binding site is contributed by 11-14 (KLSG). An involved in allosteric activation by GTP region spans residues 19–24 (GNMGYG). UMP is bound at residue glycine 53. 2 residues coordinate ATP: glycine 54 and arginine 58. Residues aspartate 73 and 134 to 141 (SGNPFFTT) contribute to the UMP site. ATP contacts are provided by threonine 161, tyrosine 167, and aspartate 170.

This sequence belongs to the UMP kinase family. In terms of assembly, homohexamer.

Its subcellular location is the cytoplasm. It catalyses the reaction UMP + ATP = UDP + ADP. It functions in the pathway pyrimidine metabolism; CTP biosynthesis via de novo pathway; UDP from UMP (UMPK route): step 1/1. Allosterically activated by GTP. Inhibited by UTP. Its function is as follows. Catalyzes the reversible phosphorylation of UMP to UDP. This is Uridylate kinase from Nostoc sp. (strain PCC 7120 / SAG 25.82 / UTEX 2576).